Here is a 551-residue protein sequence, read N- to C-terminus: Urocanate hydratase (551 aa).

NAD(+) is bound by residues 48–49, Gln126, 172–174, Glu192, Arg197, 238–239, 259–263, 269–270, and Tyr318; these read GG, GMG, NA, QTSAH, and YI. The active site involves Cys406. Residue Gly488 coordinates NAD(+).

It belongs to the urocanase family. The cofactor is NAD(+).

The protein localises to the cytoplasm. The enzyme catalyses 4-imidazolone-5-propanoate = trans-urocanate + H2O. Its pathway is amino-acid degradation; L-histidine degradation into L-glutamate; N-formimidoyl-L-glutamate from L-histidine: step 2/3. Functionally, catalyzes the conversion of urocanate to 4-imidazolone-5-propionate. The chain is Urocanate hydratase from Symbiobacterium thermophilum (strain DSM 24528 / JCM 14929 / IAM 14863 / T).